The following is a 127-amino-acid chain: Single-stranded DNA-binding protein 2 (127 aa).

In terms of domain architecture, SSB spans 4 to 103; the sequence is INKVMLVGRC…ITINTIELLG (100 aa). The tract at residues 104-127 is disordered; that stretch reads SPRKEESTSTSAPNETQAVANANF. Over residues 111 to 127 the composition is skewed to polar residues; that stretch reads TSTSAPNETQAVANANF.

As to quaternary structure, homotetramer.

The chain is Single-stranded DNA-binding protein 2 (ssb2) from Nostoc sp. (strain PCC 7120 / SAG 25.82 / UTEX 2576).